The chain runs to 270 residues: uncharacterized protein (270 aa).

The ABC transporter domain occupies 34–266 (LIARGLTKSY…PDVRRLYLGD (233 aa)). ATP is bound at residue 66–73 (GPNGAGKT).

The protein belongs to the ABC transporter superfamily.

This is an uncharacterized protein from Rhizobium meliloti (strain 1021) (Ensifer meliloti).